The chain runs to 374 residues: Homoserine O-succinyltransferase (374 aa).

An AB hydrolase-1 domain is found at 47–357 (NAILVCHALS…NFGHDSFLME (311 aa)). The active-site Nucleophile is the serine 153. Arginine 223 serves as a coordination point for substrate. Active-site residues include aspartate 318 and histidine 351. Aspartate 352 is a substrate binding site.

This sequence belongs to the AB hydrolase superfamily. MetX family. Homodimer.

It is found in the cytoplasm. It catalyses the reaction L-homoserine + succinyl-CoA = O-succinyl-L-homoserine + CoA. Its pathway is amino-acid biosynthesis; L-methionine biosynthesis via de novo pathway; O-succinyl-L-homoserine from L-homoserine: step 1/1. Transfers a succinyl group from succinyl-CoA to L-homoserine, forming succinyl-L-homoserine. This is Homoserine O-succinyltransferase from Dechloromonas aromatica (strain RCB).